The chain runs to 466 residues: Ribosome biogenesis protein YTM1 (466 aa).

The tract at residues 11-99 (IKIKFFTNEE…EAFLTLEYTR (89 aa)) is ubiquitin-like (UBL) domain. Residues 109–466 (SFNNDDWISS…QINKGSDIAK (358 aa)) are sufficient for interaction with ERB1 and association with 66S pre-ribosomes. WD repeat units lie at residues 124-163 (PTTK…EKQY), 165-203 (GHSA…IIDE), 219-258 (GHKA…MTSI), 296-336 (GHSE…CVDT), 338-377 (TTGY…TSDQ), 384-424 (GHTN…SLYT), and 431-466 (STNA…DIAK).

This sequence belongs to the WD repeat WDR12/YTM1 family. In terms of assembly, component of the NOP7 complex, composed of ERB1, NOP7 and YTM1. The complex is held together by ERB1, which interacts with NOP7 via its N-terminal domain and with YTM1 via a high-affinity interaction between the seven-bladed beta-propeller domains of the 2 proteins. The NOP7 complex associates with the 66S pre-ribosome. Interacts (via UBL domain) with MDN1 (via VWFA/MIDAS domain).

It is found in the nucleus. The protein localises to the nucleolus. It localises to the nucleoplasm. Component of the NOP7 complex, which is required for maturation of the 25S and 5.8S ribosomal RNAs and formation of the 60S ribosome. The polypeptide is Ribosome biogenesis protein YTM1 (Candida albicans (strain SC5314 / ATCC MYA-2876) (Yeast)).